Reading from the N-terminus, the 356-residue chain is A-type ATP synthase subunit C (356 aa).

Belongs to the V-ATPase V0D/AC39 subunit family. As to quaternary structure, has multiple subunits with at least A(3), B(3), C, D, E, F, H, I and proteolipid K(x).

It localises to the cell membrane. In terms of biological role, component of the A-type ATP synthase that produces ATP from ADP in the presence of a proton gradient across the membrane. In Thermoplasma volcanium (strain ATCC 51530 / DSM 4299 / JCM 9571 / NBRC 15438 / GSS1), this protein is A-type ATP synthase subunit C.